We begin with the raw amino-acid sequence, 447 residues long: tRNA(Ile)-lysidine synthase (447 aa).

Residue 31–36 (SGGMDS) participates in ATP binding.

The protein belongs to the tRNA(Ile)-lysidine synthase family.

It is found in the cytoplasm. The catalysed reaction is cytidine(34) in tRNA(Ile2) + L-lysine + ATP = lysidine(34) in tRNA(Ile2) + AMP + diphosphate + H(+). In terms of biological role, ligates lysine onto the cytidine present at position 34 of the AUA codon-specific tRNA(Ile) that contains the anticodon CAU, in an ATP-dependent manner. Cytidine is converted to lysidine, thus changing the amino acid specificity of the tRNA from methionine to isoleucine. The sequence is that of tRNA(Ile)-lysidine synthase from Pseudothermotoga lettingae (strain ATCC BAA-301 / DSM 14385 / NBRC 107922 / TMO) (Thermotoga lettingae).